A 202-amino-acid polypeptide reads, in one-letter code: IMP cyclohydrolase (202 aa).

Residues 29-52 (VQRDGTVTVEPTPDAPETDNPYIS) are disordered.

It belongs to the archaeal IMP cyclohydrolase family.

It carries out the reaction IMP + H2O = 5-formamido-1-(5-phospho-D-ribosyl)imidazole-4-carboxamide. The protein operates within purine metabolism; IMP biosynthesis via de novo pathway; IMP from 5-formamido-1-(5-phospho-D-ribosyl)imidazole-4-carboxamide: step 1/1. Its function is as follows. Catalyzes the cyclization of 5-formylamidoimidazole-4-carboxamide ribonucleotide to IMP. This chain is IMP cyclohydrolase, found in Haloarcula marismortui (strain ATCC 43049 / DSM 3752 / JCM 8966 / VKM B-1809) (Halobacterium marismortui).